A 246-amino-acid polypeptide reads, in one-letter code: E3 ubiquitin-protein ligase MARCHF2 (246 aa).

Residues 56–116 (DTPSDCPFCR…ELCHTEFAVE (61 aa)) form an RING-CH-type zinc finger. Zn(2+)-binding residues include Cys64, Cys67, Cys80, Cys82, His90, Cys93, Cys106, and Cys109. A required for interaction with IKBKG region spans residues 121–246 (PLTEWLKDPG…LKKVAEETPV (126 aa)). 2 helical membrane passes run 138–158 (LCCD…SGWL) and 175–195 (AVGL…WTLV).

In terms of assembly, interacts with STX6; the interaction promotes MARCHF2-mediated ubiquitination and degradation of CFTR. Interacts with MARCHF3. Interacts with GOPC/CAL; the interaction leads to CFTR ubiquitination and degradation. Interacts with CFTR; the interaction leads to CFTR ubiqtuitination and degradation. Interacts (via PDZ domain) with DLG1 (via PDZ domains); the interaction leads to DLG1 ubiqtuitination and degradation. Interacts with ERGIC3. Interacts with ADRB2. Interacts with IKBKG/NEMO; during the late stages of macrophage viral and bacterial infection; the interaction leads to ubiquitination and degradation of IKBKG/NEMO. Ubiquitously expressed. Present in liver (at protein level).

It localises to the endoplasmic reticulum membrane. The protein localises to the lysosome membrane. The protein resides in the endosome membrane. It is found in the golgi apparatus membrane. Its subcellular location is the cytoplasm. It localises to the cell membrane. The enzyme catalyses S-ubiquitinyl-[E2 ubiquitin-conjugating enzyme]-L-cysteine + [acceptor protein]-L-lysine = [E2 ubiquitin-conjugating enzyme]-L-cysteine + N(6)-ubiquitinyl-[acceptor protein]-L-lysine.. It functions in the pathway protein modification; protein ubiquitination. Functionally, E3 ubiquitin-protein ligase that may mediate ubiquitination of TFRC and CD86, and promote their subsequent endocytosis and sorting to lysosomes via multivesicular bodies. E3 ubiquitin ligases accept ubiquitin from an E2 ubiquitin-conjugating enzyme in the form of a thioester and then directly transfer the ubiquitin to targeted substrates. Together with GOPC/CAL mediates the ubiquitination and lysosomal degradation of CFTR. Ubiquitinates and therefore mediates the degradation of DLG1. Regulates the intracellular trafficking and secretion of alpha1-antitrypsin/SERPINA1 and HP/haptoglobin via ubiquitination and degradation of the cargo receptor ERGIC3. Negatively regulates the antiviral and antibacterial immune response by repression of the NF-kB and type 1 IFN signaling pathways, via MARCHF2-mediated K48-linked polyubiquitination of IKBKG/NEMO, resulting in its proteasomal degradation. May be involved in endosomal trafficking through interaction with STX6. This chain is E3 ubiquitin-protein ligase MARCHF2 (Marchf2), found in Rattus norvegicus (Rat).